The following is a 184-amino-acid chain: ADP-ribosylation factor-like protein 8b (184 aa).

The segment at residues 1-18 is an intramembrane region (note=Mediates targeting to membranes); it reads MGLWDALLNWLRSLFFKQ. Residues 29-34, 48-51, 70-74, and 129-132 each bind GTP; these read NAGKTS, MIPT, DLGGQ, and NKID.

It belongs to the small GTPase superfamily. Arf family. In terms of assembly, interacts with tubulin.

It localises to the late endosome membrane. Its subcellular location is the lysosome membrane. The protein resides in the cytoplasm. The protein localises to the cytoskeleton. It is found in the spindle. May play a role in lysosome motility. May play a role in chromosome segregation. In terms of biological role, (Microbial infection) Component of tomato mosaic virus (ToMV) RNA replication complexes. Required for tobamovirus multiplication, especially for efficient negative-strand RNA synthesis and viral RNA capping. This is ADP-ribosylation factor-like protein 8b from Arabidopsis thaliana (Mouse-ear cress).